The following is a 536-amino-acid chain: MNMMMQKLSILFLHLILLVLLCVHPLTTVADRNSTDWCDKTPYPDPCKCYFKNHNGFQQPTQLSEFRVMLVEAAMDRAISARAELTNSGKNCTDSKKQAVLADCIDLYGDTIMQLNRTLHGVSPKAGAAKSCTDFDAQTWLSTALTNTETCRRGSSDLNVTDFITPIVSNTKISHLISNCLAVNGALLTAGNKGNTTANQKGFPTWLSRKDKRLLRAVRANLVVAKDGSGHFNTVQAAIDVAGRRKVTSGRFVIYVKRGIYQENINVRLNNDDIMLVGDGMRSTIITGGRSVQGGYTTYNSATAGIEGLHFIAKGITFRNTAGPAKGQAVALRSSSDLSIFYKCSIEGYQDTLMVHSQRQFYRECYIYGTVDFIFGNAAAVFQNCLILPRRPLKGQANVITAQGRADPFQNTGISIHNSRILPAPDLKPVVGTVKTYMGRPWMKFSRTVVLQTYLDNVVSPVGWSPWIEGSVFGLDTLFYAEYKNTGPASSTRWRVSWKGFHVLGRASDASAFTVGKFIAGTAWLPRTGIPFTSGL.

The first 30 residues, 1–30 (MNMMMQKLSILFLHLILLVLLCVHPLTTVA), serve as a signal peptide directing secretion. The interval 31–183 (DRNSTDWCDK…SHLISNCLAV (153 aa)) is pectinesterase inhibitor 59. Residues Asn-33, Asn-91, Asn-116, Asn-159, and Asn-195 are each glycosylated (N-linked (GlcNAc...) asparagine). The interval 221-522 (NLVVAKDGSG…FTVGKFIAGT (302 aa)) is pectinesterase 59. Residues Thr-298 and Gln-328 each contribute to the substrate site. Asp-351 functions as the Proton donor; for pectinesterase activity in the catalytic mechanism. Cys-365 and Cys-385 are disulfide-bonded. The active-site Nucleophile; for pectinesterase activity is the Asp-372. 2 residues coordinate substrate: Arg-440 and Trp-442.

The protein in the N-terminal section; belongs to the PMEI family. This sequence in the C-terminal section; belongs to the pectinesterase family. In terms of tissue distribution, expressed in siliques.

The protein localises to the secreted. It is found in the cell wall. The catalysed reaction is [(1-&gt;4)-alpha-D-galacturonosyl methyl ester](n) + n H2O = [(1-&gt;4)-alpha-D-galacturonosyl](n) + n methanol + n H(+). It functions in the pathway glycan metabolism; pectin degradation; 2-dehydro-3-deoxy-D-gluconate from pectin: step 1/5. In terms of biological role, acts in the modification of cell walls via demethylesterification of cell wall pectin. The chain is Probable pectinesterase/pectinesterase inhibitor 59 (PME59) from Arabidopsis thaliana (Mouse-ear cress).